A 275-amino-acid polypeptide reads, in one-letter code: 4-hydroxy-tetrahydrodipicolinate reductase (275 aa).

NAD(+) contacts are provided by residues 13–18 (GAAGKM) and 108–110 (GTT). Catalysis depends on His-164, which acts as the Proton donor/acceptor. His-165 serves as a coordination point for (S)-2,3,4,5-tetrahydrodipicolinate. Lys-168 acts as the Proton donor in catalysis. 174-175 (GT) contacts (S)-2,3,4,5-tetrahydrodipicolinate.

The protein belongs to the DapB family.

It localises to the cytoplasm. It carries out the reaction (S)-2,3,4,5-tetrahydrodipicolinate + NAD(+) + H2O = (2S,4S)-4-hydroxy-2,3,4,5-tetrahydrodipicolinate + NADH + H(+). The catalysed reaction is (S)-2,3,4,5-tetrahydrodipicolinate + NADP(+) + H2O = (2S,4S)-4-hydroxy-2,3,4,5-tetrahydrodipicolinate + NADPH + H(+). Its pathway is amino-acid biosynthesis; L-lysine biosynthesis via DAP pathway; (S)-tetrahydrodipicolinate from L-aspartate: step 4/4. In terms of biological role, catalyzes the conversion of 4-hydroxy-tetrahydrodipicolinate (HTPA) to tetrahydrodipicolinate. The sequence is that of 4-hydroxy-tetrahydrodipicolinate reductase from Rippkaea orientalis (strain PCC 8801 / RF-1) (Cyanothece sp. (strain PCC 8801)).